A 304-amino-acid chain; its full sequence is Foldase protein PrsA (304 aa).

Residues 1 to 19 (MKKKLLSVAAVASVFTLAA) form the signal peptide. C20 carries N-palmitoyl cysteine lipidation. A lipid anchor (S-diacylglycerol cysteine) is attached at C20. One can recognise a PpiC domain in the interval 140-231 (KVEVKASHIL…FGYHIIKVTD (92 aa)). Positions 285–304 (FDLDKQEQQQMQQQMQQQQQ) are disordered. Positions 292–304 (QQQMQQQMQQQQQ) are enriched in low complexity.

Belongs to the PrsA family.

Its subcellular location is the cell membrane. It catalyses the reaction [protein]-peptidylproline (omega=180) = [protein]-peptidylproline (omega=0). Plays a major role in protein secretion by helping the post-translocational extracellular folding of several secreted proteins. This Exiguobacterium sibiricum (strain DSM 17290 / CCUG 55495 / CIP 109462 / JCM 13490 / 255-15) protein is Foldase protein PrsA.